Consider the following 85-residue polypeptide: uncharacterized protein (85 aa).

This sequence belongs to the BolA/IbaG family.

This is an uncharacterized protein from Haemophilus influenzae (strain ATCC 51907 / DSM 11121 / KW20 / Rd).